The chain runs to 211 residues: Redox-sensing transcriptional repressor Rex (211 aa).

Residues 18-57 constitute a DNA-binding region (H-T-H motif); sequence LYYRFLKNLHASGKQRVSSAELSEAVKVDSATIRRDFSYF. 92-97 is a binding site for NAD(+); it reads GVGNLG.

The protein belongs to the transcriptional regulatory Rex family. In terms of assembly, homodimer.

The protein localises to the cytoplasm. Modulates transcription in response to changes in cellular NADH/NAD(+) redox state. The protein is Redox-sensing transcriptional repressor Rex of Anoxybacillus flavithermus (strain DSM 21510 / WK1).